We begin with the raw amino-acid sequence, 397 residues long: LIM/homeobox protein Lhx9 (397 aa).

LIM zinc-binding domains lie at alanine 69–valine 130 and glutamine 131–glycine 193. Disordered regions lie at residues glutamate 248–threonine 272, glutamate 330–aspartate 364, and serine 378–phenylalanine 397. Residues threonine 267–leucine 326 constitute a DNA-binding region (homeobox). The span at leucine 353–aspartate 364 shows a compositional bias: low complexity.

In terms of assembly, interacts with LDB1 and LDB2.

Its subcellular location is the nucleus. Involved in gonadal development. The protein is LIM/homeobox protein Lhx9 (LHX9) of Homo sapiens (Human).